The primary structure comprises 561 residues: Carboxylesterase patB (561 aa).

The first 19 residues, 1-19, serve as a signal peptide directing secretion; it reads MQIINWASLLLVTWETVVA. N-linked (GlcNAc...) asparagine glycosylation is found at Asn38, Asn69, and Asn109. Ser263 functions as the Acyl-ester intermediate in the catalytic mechanism. Ser263 lines the substrate pocket. N-linked (GlcNAc...) asparagine glycosylation is present at Asn316. Glu385 serves as the catalytic Charge relay system. N-linked (GlcNAc...) asparagine glycans are attached at residues Asn393, Asn412, Asn429, and Asn496.

Belongs to the type-B carboxylesterase/lipase family.

The protein resides in the cytoplasm. It localises to the cytosol. The enzyme catalyses a carboxylic ester + H2O = an alcohol + a carboxylate + H(+). Its pathway is mycotoxin biosynthesis; patulin biosynthesis. Carboxylesterase; part of the gene cluster that mediates the biosynthesis of patulin, an acetate-derived tetraketide mycotoxin produced by several fungal species that shows antimicrobial properties against several bacteria. The function of patB in patulin synthesis has still to be characterized. The pathway begins with the synthesis of 6-methylsalicylic acid by the polyketide synthase (PKS) patK via condensation of acetate and malonate units. The 6-methylsalicylic acid decarboxylase patG then catalyzes the decarboxylation of 6-methylsalicylic acid to yield m-cresol (also known as 3-methylphenol). These first reactions occur in the cytosol. The intermediate m-cresol is then transported into the endoplasmic reticulum where the cytochrome P450 monooxygenase patH converts it to m-hydroxybenzyl alcohol, which is further converted to gentisyl alcohol by the cytochrome P450 monooxygenase patI. The oxidoreductases patJ and patO further convert gentisyl alcohol to isoepoxydon in the vacuole. PatN catalyzes then the transformation of isoepoxydon into phyllostine. The cluster protein patF is responsible for the conversion from phyllostine to neopatulin whereas the alcohol dehydrogenase patD converts neopatulin to E-ascladiol. The steps between isoepoxydon and E-ascladiol occur in the cytosol, and E-ascladiol is probably secreted to the extracellular space by one of the cluster-specific transporters patC or patM. Finally, the secreted patulin synthase patE catalyzes the conversion of E-ascladiol to patulin. The protein is Carboxylesterase patB of Penicillium expansum (Blue mold rot fungus).